The primary structure comprises 380 residues: Putative S-(hydroxymethyl)glutathione dehydrogenase 2 (380 aa).

Residue Cys-50 coordinates Zn(2+). His-51 lines the NAD(+) pocket. 7 residues coordinate Zn(2+): His-72, Glu-73, Cys-102, Cys-105, Cys-108, Cys-116, and Cys-179. Residues 204-209, Asp-228, and 297-299 contribute to the NAD(+) site; these read GLGSVG and IGV.

The protein belongs to the zinc-containing alcohol dehydrogenase family. Class-III subfamily. Zn(2+) serves as cofactor.

The catalysed reaction is a primary alcohol + NAD(+) = an aldehyde + NADH + H(+). It carries out the reaction a secondary alcohol + NAD(+) = a ketone + NADH + H(+). It catalyses the reaction S-(hydroxymethyl)glutathione + NADP(+) = S-formylglutathione + NADPH + H(+). The enzyme catalyses S-(hydroxymethyl)glutathione + NAD(+) = S-formylglutathione + NADH + H(+). The catalysed reaction is S-nitrosoglutathione + NADH + H(+) = S-(hydroxysulfenamide)glutathione + NAD(+). In terms of biological role, oxidizes long-chain alcohols and, in the presence of glutathione, is able to oxidize formaldehyde. Also acts as a S-nitroso-glutathione reductase by catalyzing the NADH-dependent reduction of S-nitrosoglutathione, thereby regulating protein S-nitrosylation. The polypeptide is Putative S-(hydroxymethyl)glutathione dehydrogenase 2 (Schizosaccharomyces pombe (strain 972 / ATCC 24843) (Fission yeast)).